Here is a 157-residue protein sequence, read N- to C-terminus: 2-C-methyl-D-erythritol 2,4-cyclodiphosphate synthase (157 aa).

Positions 8 and 10 each coordinate a divalent metal cation. 4-CDP-2-C-methyl-D-erythritol 2-phosphate-binding positions include Asp-8 to His-10 and His-34 to Ser-35. His-42 lines the a divalent metal cation pocket. 4-CDP-2-C-methyl-D-erythritol 2-phosphate is bound by residues Asp-56 to Gly-58, Phe-61 to Asp-65, Ala-100 to Ala-106, Thr-132 to Glu-135, Phe-139, and Arg-142.

The protein belongs to the IspF family. Homotrimer. Requires a divalent metal cation as cofactor.

The enzyme catalyses 4-CDP-2-C-methyl-D-erythritol 2-phosphate = 2-C-methyl-D-erythritol 2,4-cyclic diphosphate + CMP. It participates in isoprenoid biosynthesis; isopentenyl diphosphate biosynthesis via DXP pathway; isopentenyl diphosphate from 1-deoxy-D-xylulose 5-phosphate: step 4/6. Functionally, involved in the biosynthesis of isopentenyl diphosphate (IPP) and dimethylallyl diphosphate (DMAPP), two major building blocks of isoprenoid compounds. Catalyzes the conversion of 4-diphosphocytidyl-2-C-methyl-D-erythritol 2-phosphate (CDP-ME2P) to 2-C-methyl-D-erythritol 2,4-cyclodiphosphate (ME-CPP) with a corresponding release of cytidine 5-monophosphate (CMP). This chain is 2-C-methyl-D-erythritol 2,4-cyclodiphosphate synthase, found in Pseudomonas syringae pv. tomato (strain ATCC BAA-871 / DC3000).